A 1058-amino-acid polypeptide reads, in one-letter code: Vacuolar protein sorting-associated protein 54 (1058 aa).

A coiled-coil region spans residues 369-389 (SKKIVEVHERYEQKKKLLAKL).

The protein belongs to the VPS54 family. In terms of assembly, component of the Golgi-associated retrograde protein (GARP) complex, also called VFT (VPS fifty-three) complex, composed of vps-51, vps-52, vps-53 and vps-54. Within the complex interacts with vps-52 and vps-53.

The protein localises to the golgi apparatus. It localises to the trans-Golgi network. Acts as a component of the GARP complex that is involved in retrograde transport from early and late endosomes to the trans-Golgi network (TGN). The GARP complex facilitates tethering as well as SNARE complex assembly at the Golgi. The chain is Vacuolar protein sorting-associated protein 54 from Caenorhabditis elegans.